Consider the following 199-residue polypeptide: Superoxide dismutase [Mn/Fe] (199 aa).

Fe(3+)-binding residues include H27, H81, D161, and H165. Positions 27, 81, 161, and 165 each coordinate Mn(2+).

The protein belongs to the iron/manganese superoxide dismutase family. As to quaternary structure, homodimer. Requires Mn(2+) as cofactor. Fe(3+) serves as cofactor.

The enzyme catalyses 2 superoxide + 2 H(+) = H2O2 + O2. Its function is as follows. Destroys superoxide anion radicals which are normally produced within the cells and which are toxic to biological systems. Catalyzes the dismutation of superoxide anion radicals into O2 and H2O2 by successive reduction and oxidation of the transition metal ion at the active site. Also contributes to the inhibition of lipid oxidation. Manganese-preferring enzyme, less active with iron than with manganese. This chain is Superoxide dismutase [Mn/Fe] (sodA), found in Staphylococcus xylosus.